The following is a 306-amino-acid chain: Ribosomal RNA small subunit methyltransferase H (306 aa).

S-adenosyl-L-methionine-binding positions include Gly-33–Tyr-35, Asp-51, Phe-82, Asp-96, and Gln-103.

The protein belongs to the methyltransferase superfamily. RsmH family.

It is found in the cytoplasm. It catalyses the reaction cytidine(1402) in 16S rRNA + S-adenosyl-L-methionine = N(4)-methylcytidine(1402) in 16S rRNA + S-adenosyl-L-homocysteine + H(+). In terms of biological role, specifically methylates the N4 position of cytidine in position 1402 (C1402) of 16S rRNA. The polypeptide is Ribosomal RNA small subunit methyltransferase H (Rickettsia akari (strain Hartford)).